The primary structure comprises 441 residues: Probable magnesium transporter NIPA8 (441 aa).

The Extracellular segment spans residues 1-4 (MGEW). The chain crosses the membrane as a helical span at residues 5–25 (VIGAFINIFGSVAINFGTNLL). At 26–56 (KLGHNERERLALQDGGGKMPLKPIIHNQTWR) the chain is on the cytoplasmic side. The chain crosses the membrane as a helical span at residues 57 to 77 (VGILVFLLGNCLNFISFGYAA). The Extracellular segment spans residues 78-79 (QS). A helical membrane pass occupies residues 80–100 (LLAALGSIQFVSNIAFAYVVL). Residues 101–105 (NKMVT) are Cytoplasmic-facing. A helical transmembrane segment spans residues 106 to 126 (VKVLVATAFIVLGNVFLVAFG). The Extracellular portion of the chain corresponds to 127–144 (NHQSPVFTPEQLAEKYSN). The chain crosses the membrane as a helical span at residues 145–165 (VTFLVYCGILILIVAVHHFLY). The Cytoplasmic portion of the chain corresponds to 166 to 184 (RKGEVLISTPGQEISSYWK). A helical membrane pass occupies residues 185-205 (MLLPFSYAVVSGAIGSCSVLF). Topologically, residues 206–222 (AKSLSNLLRLAMSSSYQ) are extracellular. Residues 223-243 (LHSWFTYSMLLLFLSTAGFWM) traverse the membrane as a helical segment. Topologically, residues 244-255 (TRLNEGLSLYDA) are cytoplasmic. A helical transmembrane segment spans residues 256-276 (ILIVPMFQIAWTFFSICTGCI). Over 277 to 288 (YFQEFQVFDALR) the chain is Extracellular. Residues 289 to 309 (TTMFILGMMCVFIGISLLAPD) traverse the membrane as a helical segment. At 310-441 (DTRGNETKDN…MLEKTISSKA (132 aa)) the chain is on the cytoplasmic side. The disordered stretch occupies residues 313-347 (GNETKDNSSSLDSIVSSSVPTEEDRLIPQSSEDGH). A compositionally biased stretch (low complexity) spans 320–330 (SSSLDSIVSSS). Basic and acidic residues predominate over residues 334-347 (EEDRLIPQSSEDGH).

It belongs to the NIPA (TC 2.A.7) family. In terms of assembly, homodimer.

It is found in the cell membrane. It localises to the early endosome. Functionally, acts as a Mg(2+) transporter. Can also transport other divalent cations such as Fe(2+), Sr(2+), Ba(2+), Mn(2+) and Co(2+) but to a much less extent than Mg(2+). The protein is Probable magnesium transporter NIPA8 of Arabidopsis thaliana (Mouse-ear cress).